The chain runs to 112 residues: Putative UPF0320 protein YEL074W (112 aa).

The disordered stretch occupies residues 93–112 (EKSPSKSPKHKNILPFNFTK).

The protein belongs to the UPF0320 family.

The polypeptide is Putative UPF0320 protein YEL074W (Saccharomyces cerevisiae (strain ATCC 204508 / S288c) (Baker's yeast)).